The primary structure comprises 113 residues: ATP-dependent Clp protease adapter protein ClpS (113 aa).

The segment covering 1 to 11 has biased composition (basic and acidic residues); that stretch reads MHRDLHMMSDR. The interval 1–25 is disordered; it reads MHRDLHMMSDRSEDDGDTSILTATK.

Belongs to the ClpS family. As to quaternary structure, binds to the N-terminal domain of the chaperone ClpA.

In terms of biological role, involved in the modulation of the specificity of the ClpAP-mediated ATP-dependent protein degradation. This Roseobacter denitrificans (strain ATCC 33942 / OCh 114) (Erythrobacter sp. (strain OCh 114)) protein is ATP-dependent Clp protease adapter protein ClpS.